A 181-amino-acid chain; its full sequence is Nucleoside triphosphate/diphosphate phosphatase (181 aa).

Arg26 serves as the catalytic Proton donor. Mg(2+) contacts are provided by Asn90, Asp106, Asp108, Asp110, Asp123, and Glu126.

The protein belongs to the Ntdp family. Requires Mg(2+) as cofactor.

The enzyme catalyses a ribonucleoside 5'-triphosphate + H2O = a ribonucleoside 5'-diphosphate + phosphate + H(+). It catalyses the reaction a ribonucleoside 5'-diphosphate + H2O = a ribonucleoside 5'-phosphate + phosphate + H(+). Functionally, has nucleoside phosphatase activity towards nucleoside triphosphates and nucleoside diphosphates. The chain is Nucleoside triphosphate/diphosphate phosphatase from Ligilactobacillus salivarius (strain UCC118) (Lactobacillus salivarius).